A 106-amino-acid chain; its full sequence is Large ribosomal subunit protein eL42 (106 aa).

The protein belongs to the eukaryotic ribosomal protein eL42 family. Component of the large ribosomal subunit.

The protein localises to the cytoplasm. Its function is as follows. Component of the large ribosomal subunit. The ribosome is a large ribonucleoprotein complex responsible for the synthesis of proteins in the cell. The chain is Large ribosomal subunit protein eL42 (RPL36A) from Papio anubis (Olive baboon).